The following is a 327-amino-acid chain: MVINNQNNNNQNNNQNNNNKNDNLNNSTTTTTTTATTTKSSTLFHSNDFFSGLIAGIVSRTLTAPLERIKILNQVEVILKDGTKYNRIIPAFKVIIKEEGIAGLFRGNFVNIIKAGPQSAIRFYSYGAFKRMASEPDGSISVINRMWAGASSGVVSVALTHPLDVIKTHITVIAPTAATIKNVTKGIYRDLGIIGFFRGLSAGILNIAPFAALNFTFYETIKEKTQQYILKSPPLYAPSIYGAISGGLTMTILYPLDVVKRRIMLQHFDRNQLPIYKNFIDAIIKITKTEGISALYKGIRPAYLKVIPTVSINFLIYEGAITLFEKK.

The tract at residues 1–36 is disordered; that stretch reads MVINNQNNNNQNNNQNNNNKNDNLNNSTTTTTTTAT. Topologically, residues 1–48 are mitochondrial intermembrane; the sequence is MVINNQNNNNQNNNQNNNNKNDNLNNSTTTTTTTATTTKSSTLFHSND. Solcar repeat units follow at residues 43–132, 140–224, and 233–323; these read LFHS…FKRM, ISVI…IKEK, and PPLY…AITL. A helical membrane pass occupies residues 49–66; sequence FFSGLIAGIVSRTLTAPL. Residues 67–106 lie on the Mitochondrial matrix side of the membrane; it reads ERIKILNQVEVILKDGTKYNRIIPAFKVIIKEEGIAGLFR. Residues 107 to 127 traverse the membrane as a helical segment; the sequence is GNFVNIIKAGPQSAIRFYSYG. Topologically, residues 128-145 are mitochondrial intermembrane; sequence AFKRMASEPDGSISVINR. Residues 146 to 166 traverse the membrane as a helical segment; sequence MWAGASSGVVSVALTHPLDVI. The Mitochondrial matrix portion of the chain corresponds to 167-192; it reads KTHITVIAPTAATIKNVTKGIYRDLG. Residues 193–213 form a helical membrane-spanning segment; it reads IIGFFRGLSAGILNIAPFAAL. Residues 214–238 are Mitochondrial intermembrane-facing; the sequence is NFTFYETIKEKTQQYILKSPPLYAP. A helical transmembrane segment spans residues 239-259; the sequence is SIYGAISGGLTMTILYPLDVV. The Mitochondrial matrix portion of the chain corresponds to 260–303; that stretch reads KRRIMLQHFDRNQLPIYKNFIDAIIKITKTEGISALYKGIRPAY. The helical transmembrane segment at 304–324 threads the bilayer; the sequence is LKVIPTVSINFLIYEGAITLF. The Mitochondrial intermembrane portion of the chain corresponds to 325 to 327; it reads EKK.

This sequence belongs to the mitochondrial carrier (TC 2.A.29) family.

Its subcellular location is the mitochondrion inner membrane. Functionally, calcium-dependent mitochondrial solute carrier. Mitochondrial solute carriers shuttle metabolites, nucleotides, and cofactors through the mitochondrial inner membrane. This chain is Mitochondrial substrate carrier family protein A (mcfA), found in Dictyostelium discoideum (Social amoeba).